We begin with the raw amino-acid sequence, 357 residues long: NADPH HC-toxin reductase 1 (357 aa).

NADP(+) contacts are provided by residues Arg-40, Lys-47, 68-69 (DL), 88-90 (VAT), Tyr-178, Lys-182, 207-210 (LGLV), and Thr-222. The active-site Proton donor is Lys-182.

This sequence belongs to the NAD(P)-dependent epimerase/dehydratase family.

With respect to regulation, activity is sensitive to heat, dependent on NADPH, and inhibited by p-hydroxymercuribenzoate and disulfiram. In terms of biological role, in tandem with Hm2, NADPH-dependent Helminthosporium carbonum (HC) toxin reductase (HCTR), which inactivates HC toxin, a cyclic tetrapeptide produced by the fungus Cochliobolus carbonum to permit infection and acting as an inhibitor of host histone deacetylases (HDACs), thus conferring resistance against C.carbonum race 1 in resistant cultivars (e.g. cv. B73 and cv. Wisconsin 22). Catalyzes the production of 8-hydroxy derivative of HC-toxin via the reduction of the 8-keto group of 2-amino-9,10-epoxy-8-oxo-decanoic acid, an amino acid of the HC-toxin. The chain is NADPH HC-toxin reductase 1 from Zea mays (Maize).